Consider the following 823-residue polypeptide: Adhesion G protein-coupled receptor E2 (823 aa).

A signal peptide spans 1-23; that stretch reads MGGRVFLVFLAFCVWLTLPGAET. Residues 24 to 540 lie on the Extracellular side of the membrane; sequence QDSRGCARWC…EEDPVLTVIT (517 aa). Positions 25 to 66 constitute an EGF-like 1 domain; it reads DSRGCARWCPQDSSCVNATACRCNPGFSSFSEIITTPMETCD. 15 disulfide bridges follow: C29–C39, C33–C45, C47–C65, C71–C85, C79–C94, C96–C117, C123–C136, C130–C145, C147–C161, C167–C180, C174–C189, C191–C210, C216–C229, C223–C238, and C240–C259. N41 is a glycosylation site (N-linked (GlcNAc...) asparagine). Residues 67 to 118 form the EGF-like 2; calcium-binding domain; that stretch reads DINECATLSKVSCGKFSDCWNTEGSYDCVCSPGYEPVSGAKTFKNESENTCQ. N111 carries an N-linked (GlcNAc...) asparagine glycan. The 44-residue stretch at 119 to 162 folds into the EGF-like 3; calcium-binding domain; sequence DVDECQQNPRLCKSYGTCVNTLGSYTCQCLPGFKLKPEDPKLCT. The EGF-like 4; calcium-binding domain occupies 163–211; it reads DVNECTSGQNPCHSSTHCLNNVGSYQCRCRPGWQPIPGSPNGPNNTVCE. The N-linked (GlcNAc...) asparagine glycan is linked to N206. An EGF-like 5; calcium-binding domain is found at 212–260; it reads DVDECSSGQHQCDSSTVCFNTVGSYSCRCRPGWKPRHGIPNNQKDTVCE. Residues N298, N347, N354, N456, and N460 are each glycosylated (N-linked (GlcNAc...) asparagine). Residues 354–530 enclose the GAIN-B domain; it reads NFSYPAGTEL…AVLMAHYDVQ (177 aa). 2 cysteine pairs are disulfide-bonded: C482/C512 and C500/C514. The interval 482 to 530 is GPS; sequence CVFWEHGQNGCGHWATTGCSTIGTRDTSTICRCTHLSSFAVLMAHYDVQ. Residues 541-561 traverse the membrane as a helical segment; it reads YMGLSVSLLCLLLAALTFLLC. Over 562–569 the chain is Cytoplasmic; it reads KAIQNTST. A helical membrane pass occupies residues 570-590; sequence SLHLQLSLCLFLAHLLFLVAI. Topologically, residues 591–605 are extracellular; the sequence is DQTGHKVLCSIIAGT. A helical membrane pass occupies residues 606-626; that stretch reads LHYLYLATLTWMLLEALYLFL. Residues 627–644 are Cytoplasmic-facing; that stretch reads TARNLTVVNYSSINRFMK. A helical transmembrane segment spans residues 645 to 665; that stretch reads KLMFPVGYGVPAVTVAISAAS. Over 666 to 683 the chain is Extracellular; sequence RPHLYGTPSRCWLQPEKG. The chain crosses the membrane as a helical span at residues 684 to 704; the sequence is FIWGFLGPVCAIFSVNLVLFL. The Cytoplasmic segment spans residues 705-735; the sequence is VTLWILKNRLSSLNSEVSTLRNTRMLAFKAT. A helical membrane pass occupies residues 736-756; the sequence is AQLFILGCTWCLGILQVGPAA. Residues 757-760 lie on the Extracellular side of the membrane; sequence RVMA. Residues 761-781 form a helical membrane-spanning segment; that stretch reads YLFTIINSLQGVFIFLVYCLL. The Cytoplasmic segment spans residues 782 to 823; the sequence is SQQVREQYGKWSKGIRKLKTESEMHTLSSSAKADTSKPSTVN.

This sequence belongs to the G-protein coupled receptor 2 family. Adhesion G-protein coupled receptor (ADGR) subfamily. Forms a heterodimer, consisting of a large extracellular region non-covalently linked to a seven-transmembrane moiety. Interacts with chondroitin sulfate; the interaction with chondroitin sulfate is calcium-dependent. Interacts with CD55. In terms of processing, autoproteolytically cleaved into 2 subunits, an extracellular alpha subunit and a seven-transmembrane beta subunit. As to expression, expression is restricted to myeloid cells. Highest expression was found in peripheral blood leukocytes, followed by spleen and lymph nodes, with intermediate to low levels in thymus, bone marrow, fetal liver, placenta, and lung, and no expression in heart, brain, skeletal muscle, kidney, or pancreas. Expression is also detected in monocyte/macrophage and Jurkat cell lines but not in other cell lines tested. High expression in mast cells.

It is found in the cell membrane. Its subcellular location is the cell projection. The protein resides in the ruffle membrane. In terms of biological role, cell surface receptor that binds to the chondroitin sulfate moiety of glycosaminoglycan chains and promotes cell attachment. Promotes granulocyte chemotaxis, degranulation and adhesion. In macrophages, promotes the release of inflammatory cytokines, including IL8 and TNF. Signals probably through G-proteins. Is a regulator of mast cell degranulation. The protein is Adhesion G protein-coupled receptor E2 of Homo sapiens (Human).